We begin with the raw amino-acid sequence, 225 residues long: Cytidylate kinase (225 aa).

ATP is bound at residue 11 to 19 (GPAAAGKST).

It belongs to the cytidylate kinase family. Type 1 subfamily.

Its subcellular location is the cytoplasm. It carries out the reaction CMP + ATP = CDP + ADP. The enzyme catalyses dCMP + ATP = dCDP + ADP. This is Cytidylate kinase from Bacillus pumilus (strain SAFR-032).